A 637-amino-acid polypeptide reads, in one-letter code: 1-deoxy-D-xylulose-5-phosphate synthase (637 aa).

Residues His-76 and 117 to 119 contribute to the thiamine diphosphate site; that span reads GHS. Asp-148 lines the Mg(2+) pocket. Thiamine diphosphate contacts are provided by residues 149 to 150, Asn-177, Tyr-294, and Glu-381; that span reads GA. Asn-177 is a binding site for Mg(2+).

It belongs to the transketolase family. DXPS subfamily. Homodimer. Mg(2+) is required as a cofactor. It depends on thiamine diphosphate as a cofactor.

The catalysed reaction is D-glyceraldehyde 3-phosphate + pyruvate + H(+) = 1-deoxy-D-xylulose 5-phosphate + CO2. It functions in the pathway metabolic intermediate biosynthesis; 1-deoxy-D-xylulose 5-phosphate biosynthesis; 1-deoxy-D-xylulose 5-phosphate from D-glyceraldehyde 3-phosphate and pyruvate: step 1/1. In terms of biological role, catalyzes the acyloin condensation reaction between C atoms 2 and 3 of pyruvate and glyceraldehyde 3-phosphate to yield 1-deoxy-D-xylulose-5-phosphate (DXP). This chain is 1-deoxy-D-xylulose-5-phosphate synthase, found in Neisseria meningitidis serogroup A / serotype 4A (strain DSM 15465 / Z2491).